The chain runs to 570 residues: Urease subunit alpha (570 aa).

The Urease domain maps to 133-570 (GGIDNHIHYI…LPLAQLYNLF (438 aa)). His-138, His-140, and Lys-221 together coordinate Ni(2+). At Lys-221 the chain carries N6-carboxylysine. His-223 lines the substrate pocket. Residues His-250 and His-276 each coordinate Ni(2+). The active-site Proton donor is His-324. Asp-364 serves as a coordination point for Ni(2+).

This sequence belongs to the metallo-dependent hydrolases superfamily. Urease alpha subunit family. In terms of assembly, heterotrimer of UreA (gamma), UreB (beta) and UreC (alpha) subunits. Three heterotrimers associate to form the active enzyme. Ni cation serves as cofactor. Post-translationally, carboxylation allows a single lysine to coordinate two nickel ions.

It is found in the cytoplasm. It carries out the reaction urea + 2 H2O + H(+) = hydrogencarbonate + 2 NH4(+). It functions in the pathway nitrogen metabolism; urea degradation; CO(2) and NH(3) from urea (urease route): step 1/1. This is Urease subunit alpha from Cytophaga hutchinsonii (strain ATCC 33406 / DSM 1761 / CIP 103989 / NBRC 15051 / NCIMB 9469 / D465).